A 213-amino-acid polypeptide reads, in one-letter code: MRTAYHEQLSELSERLGEMCGLAGIAMERATQALLQADLVLAEQVISDHEKIATLSARAEESAFVLLALQAPVAGDLRAIVSAIQMVADIDRMGALALHVAKIARRRHPQHALPEEVNGYFAEMGRVAVELGNSAQEVVLSHDPEKAAQIREEDDAMDDLHRHLFTVLMDREWKHGVAAAVDVTLLSRFYERFADHAVEVARRVIFQATGAFP.

It belongs to the PhoU family. As to quaternary structure, homodimer.

It is found in the cytoplasm. Its function is as follows. Plays a role in the regulation of phosphate uptake. In this role, it may bind, possibly as a chaperone, to PhoR, PhoP or a PhoR-PhoP complex to promote dephosphorylation of phospho-PhoP, or inhibit formation of the PhoR-PhoP transitory complex. The chain is Phosphate-specific transport system accessory protein PhoU homolog 2 (phoU2) from Mycobacterium bovis (strain ATCC BAA-935 / AF2122/97).